Here is a 137-residue protein sequence, read N- to C-terminus: DNA-directed RNA polymerase I subunit RPA14 (137 aa).

Residues 100–137 (PPAQDFSAAPIQVSTTEKKETSIGVSATGGKKTTFADE) form a disordered region. S121 carries the phosphoserine modification.

In terms of assembly, component of the RNA polymerase I (Pol I) complex consisting of 14 subunits: RPA135, RPA190, RPC40, RPA14, RPB5, RPO26, RPA43, RPB8, RPA12, RPB10, RPC19, RPC10, RPA49 and RPA34. The complex is composed of a horseshoe-shaped core containing ten subunits (RPA135, RPA190, RPB5, RPO26, RPB8, RPB10, RPC10, RPA12, RPC19 and RPC40) where RPA135 and RPA190 form the DNA-binding cleft. Outside of the core, RPA14 and RPA43 form the stalk that mediates interactions with transcription initiation factors and newly synthesized RNA. The N-terminus is blocked.

It localises to the nucleus. Its subcellular location is the nucleolus. In terms of biological role, DNA-dependent RNA polymerases catalyze the transcription of DNA into RNA using the four ribonucleoside triphosphates as substrates. Component of RNA polymerase I (Pol I) which synthesizes ribosomal RNA precursors. RPA14 seems to play a role in the stability of subunits RPO26 and RPA43. In vitro, the RPA14-RPA43 subcomplex binds single-stranded RNA. This Saccharomyces cerevisiae (strain ATCC 204508 / S288c) (Baker's yeast) protein is DNA-directed RNA polymerase I subunit RPA14 (RPA14).